Consider the following 961-residue polypeptide: Vinculin (961 aa).

Tandem repeats lie at residues 258–362 (ELDN…MGEL) and 371–470 (LGVD…ELKA). A 2 X repeats region spans residues 258–470 (ELDNLTVLKK…LTQKLYELKA (213 aa)). The interval 720-778 (AIAPPQPPPLPTSLPPPIPELSALHLSNQNAERAPPRPPLPREGLAPVRPPPPETDDED) is disordered. Pro residues predominate over residues 723–738 (PPQPPPLPTSLPPPIP). Threonine 774 is subject to Phosphothreonine.

It belongs to the vinculin/alpha-catenin family. Exhibits self-association properties.

The protein resides in the cytoplasm. Its subcellular location is the cytoskeleton. It is found in the cell junction. It localises to the adherens junction. The protein localises to the cell membrane. Involved in cell adhesion. May be involved in the attachment of the actin-based microfilaments to the plasma membrane. In Drosophila melanogaster (Fruit fly), this protein is Vinculin (Vinc).